A 236-amino-acid polypeptide reads, in one-letter code: UPF0257 lipoprotein YnfC (236 aa).

An N-terminal signal peptide occupies residues 1–16 (MKKPLLLTLLCMILAG). Residue cysteine 17 is the site of N-palmitoyl cysteine attachment. Cysteine 17 carries the S-diacylglycerol cysteine lipid modification.

This sequence belongs to the UPF0257 family.

The protein resides in the cell membrane. This chain is UPF0257 lipoprotein YnfC, found in Salmonella dublin (strain CT_02021853).